The chain runs to 633 residues: Keratin, type II cytoskeletal 2 epidermal (633 aa).

Residues 1–189 (MSCQISCKSR…DPEIQNVKSQ (189 aa)) are head. R18 is subject to Asymmetric dimethylarginine. A phosphoserine mark is found at S21, S24, and S60. The segment at 190-225 (EREQIKTLNNKFASFIDKVRFLEQQNQVLQTKWELL) is coil 1A. Residues 190–503 (EREQIKTLNN…KLLEGEECRM (314 aa)) form the IF rod domain. The interval 226–244 (QQLDVSTRTTNLEPIFQAY) is linker 1. Residues 245–336 (IAKLKKYVDT…FLFDXELSQM (92 aa)) form a coil 1B region. Residues 337–360 (QTQISETNVTLSMDNNRSLDLDSI) form a linker 12 region. Positions 361–499 (ISEVKAQYEE…ATYRKLLEGE (139 aa)) are coil 2. Positions 500 to 633 (ECRMSGDLSS…SGSSVTFSFR (134 aa)) are tail. Over residues 518–527 (SSMSSSMTSR) the composition is skewed to low complexity. The disordered stretch occupies residues 518 to 633 (SSMSSSMTSR…SGSSVTFSFR (116 aa)). Gly residues predominate over residues 528 to 613 (GGFGGYGSGG…GYGSGGGSRG (86 aa)). R588 and R612 each carry omega-N-methylarginine.

It belongs to the intermediate filament family. In terms of assembly, heterotetramer of two type I and two type II keratins. Associates with KRT10.

It localises to the cytoplasm. In terms of biological role, probably contributes to terminal cornification. Associated with keratinocyte activation, proliferation and keratinization. Required for maintenance of corneocytes and keratin filaments in suprabasal keratinocytes in the epidermis of the ear, potentially via moderation of expression and localization of keratins and their partner proteins. Plays a role in the establishment of the epidermal barrier on plantar skin. This is Keratin, type II cytoskeletal 2 epidermal (KRT2) from Canis lupus familiaris (Dog).